The primary structure comprises 236 residues: Proteasome subunit alpha (236 aa).

The protein belongs to the peptidase T1A family. As to quaternary structure, the 20S proteasome core is composed of 14 alpha and 14 beta subunits that assemble into four stacked heptameric rings, resulting in a barrel-shaped structure. The two inner rings, each composed of seven catalytic beta subunits, are sandwiched by two outer rings, each composed of seven alpha subunits. The catalytic chamber with the active sites is on the inside of the barrel. Has a gated structure, the ends of the cylinder being occluded by the N-termini of the alpha-subunits. Is capped by the proteasome-associated ATPase, ARC.

It is found in the cytoplasm. Its pathway is protein degradation; proteasomal Pup-dependent pathway. The formation of the proteasomal ATPase ARC-20S proteasome complex, likely via the docking of the C-termini of ARC into the intersubunit pockets in the alpha-rings, may trigger opening of the gate for substrate entry. Interconversion between the open-gate and close-gate conformations leads to a dynamic regulation of the 20S proteasome proteolysis activity. Its function is as follows. Component of the proteasome core, a large protease complex with broad specificity involved in protein degradation. The chain is Proteasome subunit alpha from Pseudarthrobacter chlorophenolicus (strain ATCC 700700 / DSM 12829 / CIP 107037 / JCM 12360 / KCTC 9906 / NCIMB 13794 / A6) (Arthrobacter chlorophenolicus).